Here is a 160-residue protein sequence, read N- to C-terminus: MATQKKPDLSDPTLRAKLAKGMGHNYYGEPAWPNDLLYVFPIVIMGSFACIVALAVLDPAMTGEPANPFATPLEILPEWYLYPVFQILRSLPNKLLGVLAMASVPLGLILVPFIENVNKFQNPFRRPVATTVFLFGTLVTLWLGIGAALPLDKSLTLGLF.

3 helical membrane passes run 36-56, 95-115, and 131-151; these read LLYV…ALAV, LLGV…PFIE, and TVFL…ALPL.

The protein belongs to the cytochrome b family. PetD subfamily. In terms of assembly, the 4 large subunits of the cytochrome b6-f complex are cytochrome b6, subunit IV (17 kDa polypeptide, PetD), cytochrome f and the Rieske protein, while the 4 small subunits are PetG, PetL, PetM and PetN. The complex functions as a dimer.

The protein resides in the cellular thylakoid membrane. Its function is as follows. Component of the cytochrome b6-f complex, which mediates electron transfer between photosystem II (PSII) and photosystem I (PSI), cyclic electron flow around PSI, and state transitions. The sequence is that of Cytochrome b6-f complex subunit 4 from Trichormus variabilis (strain ATCC 29413 / PCC 7937) (Anabaena variabilis).